The following is a 257-amino-acid chain: L-aspartate dehydrogenase (257 aa).

Residues alanine 124 and asparagine 180 each coordinate NAD(+). The active site involves histidine 208.

Belongs to the L-aspartate dehydrogenase family.

The enzyme catalyses L-aspartate + NADP(+) + H2O = oxaloacetate + NH4(+) + NADPH + H(+). It carries out the reaction L-aspartate + NAD(+) + H2O = oxaloacetate + NH4(+) + NADH + H(+). It functions in the pathway cofactor biosynthesis; NAD(+) biosynthesis; iminoaspartate from L-aspartate (dehydrogenase route): step 1/1. In terms of biological role, specifically catalyzes the NAD or NADP-dependent dehydrogenation of L-aspartate to iminoaspartate. The chain is L-aspartate dehydrogenase from Methanothermobacter thermautotrophicus (strain ATCC 29096 / DSM 1053 / JCM 10044 / NBRC 100330 / Delta H) (Methanobacterium thermoautotrophicum).